Reading from the N-terminus, the 396-residue chain is NADH-quinone oxidoreductase subunit D (396 aa).

This sequence belongs to the complex I 49 kDa subunit family. NDH-1 is composed of 14 different subunits. Subunits NuoB, C, D, E, F, and G constitute the peripheral sector of the complex.

The protein localises to the cell inner membrane. It catalyses the reaction a quinone + NADH + 5 H(+)(in) = a quinol + NAD(+) + 4 H(+)(out). In terms of biological role, NDH-1 shuttles electrons from NADH, via FMN and iron-sulfur (Fe-S) centers, to quinones in the respiratory chain. The immediate electron acceptor for the enzyme in this species is believed to be ubiquinone. Couples the redox reaction to proton translocation (for every two electrons transferred, four hydrogen ions are translocated across the cytoplasmic membrane), and thus conserves the redox energy in a proton gradient. In Rhodopseudomonas palustris (strain BisA53), this protein is NADH-quinone oxidoreductase subunit D.